The following is a 447-amino-acid chain: Putative branched-chain amino acid carrier protein SE_1090 (447 aa).

12 helical membrane passes run 5 to 25 (TWII…LIFP), 40 to 60 (ILAF…VGAL), 74 to 94 (PRFS…LFAI), 114 to 134 (GNLA…YLCL), 143 to 163 (IGSL…IKGF), 193 to 213 (GYLT…VNAI), 229 to 249 (IIAG…LGYI), 290 to 310 (LLGI…IVSV), 317 to 337 (ILPK…SFIL), 350 to 370 (VPVL…ILIA), 382 to 402 (IPLI…QGWI), and 417 to 437 (LEWF…SYFV).

The protein belongs to the branched chain amino acid transporter family.

The protein resides in the cell membrane. Its function is as follows. Component of the transport system for branched-chain amino acids (leucine, isoleucine and valine), which is coupled to a proton motive force. The polypeptide is Putative branched-chain amino acid carrier protein SE_1090 (Staphylococcus epidermidis (strain ATCC 12228 / FDA PCI 1200)).